The sequence spans 279 residues: Large ribosomal subunit protein uL2 (279 aa).

Positions 224-279 (AMNPIDHPHGGGEGRTSGGRHPVTPWGKGTKGNRTRKSKASDKLIVRSRHAKKKGR) are disordered. A compositionally biased stretch (basic residues) spans 269 to 279 (VRSRHAKKKGR).

Belongs to the universal ribosomal protein uL2 family. In terms of assembly, part of the 50S ribosomal subunit. Forms a bridge to the 30S subunit in the 70S ribosome.

One of the primary rRNA binding proteins. Required for association of the 30S and 50S subunits to form the 70S ribosome, for tRNA binding and peptide bond formation. It has been suggested to have peptidyltransferase activity; this is somewhat controversial. Makes several contacts with the 16S rRNA in the 70S ribosome. The protein is Large ribosomal subunit protein uL2 of Cereibacter sphaeroides (strain ATCC 17029 / ATH 2.4.9) (Rhodobacter sphaeroides).